Here is a 344-residue protein sequence, read N- to C-terminus: Meiotic expression up-regulated protein 26 (344 aa).

It is found in the nucleus. The polypeptide is Meiotic expression up-regulated protein 26 (meu26) (Schizosaccharomyces pombe (strain 972 / ATCC 24843) (Fission yeast)).